Consider the following 452-residue polypeptide: Probable ECA polymerase (452 aa).

11 helical membrane passes run 6-26 (FSGL…LTWF), 37-57 (VFFS…TSVL), 63-83 (VGVA…CFYG), 118-138 (VILM…NGFL), 155-175 (GVAL…VYFL), 181-201 (AWLF…MIVG), 207-227 (IIIA…ISLW), 228-248 (MLAA…LKRY), 341-361 (LVVM…GLII), 378-398 (YKAA…IVLA), and 410-430 (VFFL…FWLF).

Belongs to the WzyE family. Probably part of a complex composed of WzxE, WzyE and WzzE.

It localises to the cell inner membrane. It functions in the pathway bacterial outer membrane biogenesis; enterobacterial common antigen biosynthesis. Probably involved in the polymerization of enterobacterial common antigen (ECA) trisaccharide repeat units. This Salmonella arizonae (strain ATCC BAA-731 / CDC346-86 / RSK2980) protein is Probable ECA polymerase.